Consider the following 196-residue polypeptide: Holliday junction branch migration complex subunit RuvA (196 aa).

The tract at residues 1 to 63 is domain I; that stretch reads MINKIYGKVI…ENELKLFGFL (63 aa). Residues 64–139 form a domain II region; it reads NSDERETFKS…KLLINNELES (76 aa). Serine 139 is a region of interest (flexible linker). Residues 139-196 are domain III; it reads SSLFRFKELEESIVSMGFDRKIVNSKLKEAFNLVEFSNLKDSEKEQFLFKEVLKRMSN.

It belongs to the RuvA family. Homotetramer. Forms an RuvA(8)-RuvB(12)-Holliday junction (HJ) complex. HJ DNA is sandwiched between 2 RuvA tetramers; dsDNA enters through RuvA and exits via RuvB. An RuvB hexamer assembles on each DNA strand where it exits the tetramer. Each RuvB hexamer is contacted by two RuvA subunits (via domain III) on 2 adjacent RuvB subunits; this complex drives branch migration. In the full resolvosome a probable DNA-RuvA(4)-RuvB(12)-RuvC(2) complex forms which resolves the HJ.

Its subcellular location is the cytoplasm. The RuvA-RuvB-RuvC complex processes Holliday junction (HJ) DNA during genetic recombination and DNA repair, while the RuvA-RuvB complex plays an important role in the rescue of blocked DNA replication forks via replication fork reversal (RFR). RuvA specifically binds to HJ cruciform DNA, conferring on it an open structure. The RuvB hexamer acts as an ATP-dependent pump, pulling dsDNA into and through the RuvAB complex. HJ branch migration allows RuvC to scan DNA until it finds its consensus sequence, where it cleaves and resolves the cruciform DNA. This is Holliday junction branch migration complex subunit RuvA from Borreliella afzelii (strain PKo) (Borrelia afzelii).